A 102-amino-acid polypeptide reads, in one-letter code: NADH-quinone oxidoreductase subunit K (102 aa).

A run of 3 helical transmembrane segments spans residues 5-25, 30-50, and 62-82; these read LAHY…GIFV, IIVI…NLVA, and IFAM…LAIL.

The protein belongs to the complex I subunit 4L family. In terms of assembly, NDH-1 is composed of 14 different subunits. Subunits NuoA, H, J, K, L, M, N constitute the membrane sector of the complex.

The protein resides in the cell inner membrane. It catalyses the reaction a quinone + NADH + 5 H(+)(in) = a quinol + NAD(+) + 4 H(+)(out). Functionally, NDH-1 shuttles electrons from NADH, via FMN and iron-sulfur (Fe-S) centers, to quinones in the respiratory chain. The immediate electron acceptor for the enzyme in this species is believed to be ubiquinone. Couples the redox reaction to proton translocation (for every two electrons transferred, four hydrogen ions are translocated across the cytoplasmic membrane), and thus conserves the redox energy in a proton gradient. This chain is NADH-quinone oxidoreductase subunit K, found in Phenylobacterium zucineum (strain HLK1).